A 626-amino-acid chain; its full sequence is DNA mismatch repair protein MutL (626 aa).

It belongs to the DNA mismatch repair MutL/HexB family.

In terms of biological role, this protein is involved in the repair of mismatches in DNA. It is required for dam-dependent methyl-directed DNA mismatch repair. May act as a 'molecular matchmaker', a protein that promotes the formation of a stable complex between two or more DNA-binding proteins in an ATP-dependent manner without itself being part of a final effector complex. The polypeptide is DNA mismatch repair protein MutL (Cellvibrio japonicus (strain Ueda107) (Pseudomonas fluorescens subsp. cellulosa)).